The following is a 382-amino-acid chain: Prostaglandin D2 receptor 2 (382 aa).

Residues 1–32 (MANVTLKPLCPLLEEMVQLPNHSNSSLRYIDH) are Extracellular-facing. N-linked (GlcNAc...) asparagine glycosylation is found at Asn-3, Asn-21, and Asn-24. A helical membrane pass occupies residues 33–55 (VSVLLHGLASLLGLVENGLILFV). Over 56–66 (VGCRMRQTVVT) the chain is Cytoplasmic. A helical membrane pass occupies residues 67–88 (TWVLHLALSDLLAAASLPFFTY). Over 89–105 (FLAVGHSWELGTTFCKL) the chain is Extracellular. Cys-103 and Cys-181 are oxidised to a cystine. Residues 106–126 (HSSVFFLNMFASGFLLSAISL) traverse the membrane as a helical segment. Topologically, residues 127–145 (DRCLQVVRPVWAQNHRTVA) are cytoplasmic. A helical membrane pass occupies residues 146–167 (VAHRVCLMLWALAVLNTIPYFV). At 168-209 (FRDTIPRLDGRIMCYYNLLLWNPGPDRDTTCDYRQKALAVSK) the chain is on the extracellular side. A helical transmembrane segment spans residues 210–230 (FLLAFMVPLAIIASSHVAVSL). Residues 231-246 (RLHHRGRQRTGRFVRL) lie on the Cytoplasmic side of the membrane. The chain crosses the membrane as a helical span at residues 247-268 (VAAIVVAFVLCWGPYHIFSLLE). Residues 269 to 287 (ARAHSVTTLRQLASRGLPF) lie on the Extracellular side of the membrane. Residues 288–307 (VTSLAFFNSVVNPLLYVFTC) traverse the membrane as a helical segment. Topologically, residues 308 to 357 (PDMLYKLRRSLRAVLESVLVEDSDQSGGLRNRRRRASSTATPASTLLLAD) are cytoplasmic. The Involved in the recycling of CRTH2 motif lies at 329 to 332 (DSDQ). Phosphoserine occurs at positions 330 and 344.

Belongs to the G-protein coupled receptor 1 family. Phosphorylated.

Its subcellular location is the cell membrane. In terms of biological role, receptor for prostaglandin D2 (PGD2). Coupled to the G(i)-protein. Receptor activation may result in pertussis toxin-sensitive decreases in cAMP levels and Ca(2+) mobilization. PI3K signaling is also implicated in mediating PTGDR2 effects. PGD2 induced receptor internalization. CRTH2 internalization can be regulated by diverse kinases such as, PKC, PKA, GRK2, GPRK5/GRK5 and GRK6. Receptor activation is responsible, at least in part, in immune regulation and allergic/inflammation responses. This chain is Prostaglandin D2 receptor 2 (Ptgdr2), found in Mus musculus (Mouse).